We begin with the raw amino-acid sequence, 76 residues long: Conotoxin Bu28 (76 aa).

An N-terminal signal peptide occupies residues 1–24 (MTSVQSATCCCLLWLVLCVQLVTP). Positions 25–39 (DSPATAQLSRHLTAR) are excised as a propeptide. 2 cysteine pairs are disulfide-bonded: C50–C63 and C54–C65. The residue at position 69 (R69) is an Arginine amide. A propeptide spanning residues 71 to 76 (VVSSSI) is cleaved from the precursor.

This sequence belongs to the conotoxin J superfamily. Expressed by the venom duct.

The protein localises to the secreted. In terms of biological role, highly inhibits both nicotinic acetylcholine receptors (neuronal (alpha-3/beta-4) and muscular (alpha-1/beta-1/epsilon/delta) subtypes) and the voltage-gated potassium channel Kv1.6/KCNA6 subtype. The chain is Conotoxin Bu28 from Conus bullatus (Bubble cone).